The sequence spans 276 residues: Ice-binding protein (276 aa).

Positions 1–24 (MKILKRIPVLAVLLVGLMTNCSND) are cleaved as a signal peptide. The short motif at 79-82 (TGIT) is the Ice-binding site motif (T-A/G-X-T/N) 1 element. Cysteine 107 and cysteine 124 are joined by a disulfide. Short sequence motifs (ice-binding site motif (T-A/G-X-T/N)) lie at residues 245–248 (TGIN) and 263–266 (TAVT).

Belongs to the ice-binding protein family. In terms of assembly, monomer.

It localises to the secreted. Its function is as follows. Has antifreeze activity for survival in a subzero environment. Binds to the surface of ice crystals and inhibits their growth. Has high thermal hysteresis (TH) activity, which is the ability to lower the freezing point of an aqueous solution below its melting point, and thus the freezing of the cell fluid can be prevented protecting the organism from ice damage. The TH activity of this protein is 2.2 degrees Celsius at 5 uM and 2.5 degrees Celsius at 50 uM. In Flavobacterium frigoris (strain PS1), this protein is Ice-binding protein.